The sequence spans 90 residues: uncharacterized protein (90 aa).

It to E.coli RlpA.

This is an uncharacterized protein from Synechocystis sp. (strain ATCC 27184 / PCC 6803 / Kazusa).